The following is a 377-amino-acid chain: F-box protein At1g11810 (377 aa).

Positions 2–48 constitute an F-box domain; it reads TTTMSTLPVVLVDEILARVPITSLRSLRSTCKKWEASSKTNLVGGKA.

This Arabidopsis thaliana (Mouse-ear cress) protein is F-box protein At1g11810.